The following is a 3491-amino-acid chain: Genome polyprotein (3491 aa).

The region spanning 183 to 277 (KYNTALVQVY…RISITFRNQI (95 aa)) is the Fe2OG dioxygenase domain. Fe cation is bound by residues His201, Asp203, and His259. Arg268 provides a ligand contact to 2-oxoglutarate. Residues 559–588 (DSASDNDVETMKKSEKRRKRRKRNPPPVRQ) form a disordered region. Residues 572-582 (SEKRRKRRKRN) show a composition bias toward basic residues. The region spanning 589–745 (VITRAPVSNI…DCLADDYLQY (157 aa)) is the Peptidase S30 domain. Residues His640, Asp651, and Ser692 each act as for P1 proteinase activity in the active site. The region spanning 948–1070 (VHVPLEGLCF…RNGCQEYRVG (123 aa)) is the Peptidase C6 domain. Residues Cys956 and His1029 each act as for helper component proteinase activity in the active site. The Helicase ATP-binding domain occupies 1540–1692 (TLTSSVKREF…TMHPVEVVNM (153 aa)). Residue 1553-1560 (GFVGSGKS) participates in ATP binding. Positions 1642-1645 (DESH) match the DEAH box motif. Positions 1696 to 1869 (SFEDFAIGQR…NVPPIFDNVD (174 aa)) constitute a Helicase C-terminal domain. Position 2238 is an O-(5'-phospho-RNA)-tyrosine (Tyr2238). The region spanning 2354–2570 (GRSTIKSGNN…LDVGSNNAIR (217 aa)) is the Peptidase C4 domain. Active-site for nuclear inclusion protein A activity residues include His2400, Asp2435, and Cys2504. Residues 2850–2974 (FVYGTGDGSQ…AIHPDRESIL (125 aa)) enclose the RdRp catalytic domain. Disordered stretches follow at residues 3200-3279 (MPQA…RKGL) and 3471-3491 (RHTT…AMMA). Over residues 3236-3248 (RLSPERIVRHDDD) the composition is skewed to basic and acidic residues. Thr3473 carries the phosphothreonine modification.

The protein belongs to the potyviridae genome polyprotein family. Fe(2+) is required as a cofactor. Post-translationally, VPg is uridylylated by the polymerase and is covalently attached to the 5'-end of the genomic RNA. This uridylylated form acts as a nucleotide-peptide primer for the polymerase. Genome polyprotein of potyviruses undergoes post-translational proteolytic processing by the main proteinase NIa-pro resulting in the production of at least ten individual proteins. The P1 proteinase and the HC-pro cleave only their respective C-termini autocatalytically. 6K1 is essential for proper proteolytic separation of P3 from CI.

The protein resides in the host cytoplasmic vesicle. It is found in the virion. It catalyses the reaction RNA(n) + a ribonucleoside 5'-triphosphate = RNA(n+1) + diphosphate. It carries out the reaction Hydrolyzes glutaminyl bonds, and activity is further restricted by preferences for the amino acids in P6 - P1' that vary with the species of potyvirus, e.g. Glu-Xaa-Xaa-Tyr-Xaa-Gln-|-(Ser or Gly) for the enzyme from tobacco etch virus. The natural substrate is the viral polyprotein, but other proteins and oligopeptides containing the appropriate consensus sequence are also cleaved.. The catalysed reaction is Hydrolyzes a Gly-|-Gly bond at its own C-terminus, commonly in the sequence -Tyr-Xaa-Val-Gly-|-Gly, in the processing of the potyviral polyprotein.. Its function is as follows. Required for aphid transmission and also has proteolytic activity. Only cleaves a Gly-Gly dipeptide at its own C-terminus. Interacts with virions and aphid stylets. Acts as a suppressor of RNA-mediated gene silencing, also known as post-transcriptional gene silencing (PTGS), a mechanism of plant viral defense that limits the accumulation of viral RNAs. May have RNA-binding activity. Functionally, has helicase activity. It may be involved in replication. Indispensable for virus replication. Reduces the abundance of host transcripts related to jasmonic acid biosynthesis therefore altering the host defenses. In order to increase its own stability, decreases host protein degradation pathways. In terms of biological role, indispensable for virus replication. Its function is as follows. Mediates the cap-independent, EIF4E-dependent translation of viral genomic RNAs. Binds to the cap-binding site of host EIF4E and thus interferes with the host EIF4E-dependent mRNA export and translation. VPg-RNA directly binds EIF4E and is a template for transcription. Also forms trimeric complexes with EIF4E-EIF4G, which are templates for translation. Functionally, has RNA-binding and proteolytic activities. An RNA-dependent RNA polymerase that plays an essential role in the virus replication. In terms of biological role, involved in aphid transmission, cell-to-cell and systemis movement, encapsidation of the viral RNA and in the regulation of viral RNA amplification. This is Genome polyprotein from Blackberry virus Y (isolate Blackberry plant/USA:Arkansas/C3ARK/2005) (BVY).